The sequence spans 183 residues: Ribosome maturation factor RimM (183 aa).

A PRC barrel domain is found at 105-181; the sequence is ANEYHLMDLI…RIEIDPPLGL (77 aa).

The protein belongs to the RimM family. Binds ribosomal protein uS19.

It localises to the cytoplasm. Its function is as follows. An accessory protein needed during the final step in the assembly of 30S ribosomal subunit, possibly for assembly of the head region. Essential for efficient processing of 16S rRNA. May be needed both before and after RbfA during the maturation of 16S rRNA. It has affinity for free ribosomal 30S subunits but not for 70S ribosomes. This chain is Ribosome maturation factor RimM, found in Thermosynechococcus vestitus (strain NIES-2133 / IAM M-273 / BP-1).